A 173-amino-acid polypeptide reads, in one-letter code: Putative C-type lectin protein FPV198 (173 aa).

One can recognise a C-type lectin domain in the interval 50–169 (GMSGWVQINN…CNKKHTGICF (120 aa)).

This chain is Putative C-type lectin protein FPV198, found in Vertebrata (FPV).